Consider the following 329-residue polypeptide: Glycerol-3-phosphate dehydrogenase [NAD(P)+] (329 aa).

4 residues coordinate NADPH: Ser-10, Trp-11, Arg-31, and Lys-105. Sn-glycerol 3-phosphate contacts are provided by Lys-105, Gly-134, and Ser-136. Ala-138 contacts NADPH. Lys-189, Asp-242, Ser-252, Arg-253, and Asn-254 together coordinate sn-glycerol 3-phosphate. Lys-189 functions as the Proton acceptor in the catalytic mechanism. Arg-253 provides a ligand contact to NADPH. NADPH contacts are provided by Val-277 and Glu-279.

The protein belongs to the NAD-dependent glycerol-3-phosphate dehydrogenase family.

The protein resides in the cytoplasm. It carries out the reaction sn-glycerol 3-phosphate + NAD(+) = dihydroxyacetone phosphate + NADH + H(+). The catalysed reaction is sn-glycerol 3-phosphate + NADP(+) = dihydroxyacetone phosphate + NADPH + H(+). It participates in membrane lipid metabolism; glycerophospholipid metabolism. Catalyzes the reduction of the glycolytic intermediate dihydroxyacetone phosphate (DHAP) to sn-glycerol 3-phosphate (G3P), the key precursor for phospholipid synthesis. In Neisseria meningitidis serogroup A / serotype 4A (strain DSM 15465 / Z2491), this protein is Glycerol-3-phosphate dehydrogenase [NAD(P)+].